The following is a 277-amino-acid chain: Cell death abnormality protein 2 (277 aa).

Residues 14-112 (FYFPGMSRED…EASLLSAYKK (99 aa)) enclose the SH2 domain. In terms of domain architecture, SH3 1 spans 113–173 (PIIEVVVGTF…PANYVQVQSG (61 aa)). The disordered stretch occupies residues 179–217 (RISKGTSQSSIGSSGNGAERFSSTSTSSENAEAHPTLPT). The span at 182–206 (KGTSQSSIGSSGNGAERFSSTSTSS) shows a compositional bias: low complexity. Residues 214–275 (TLPTTAKVTF…PFTYIRFNTA (62 aa)) form the SH3 2 domain.

It belongs to the CRK family. Interacts with ced-5 (via C-terminus which contains a candidate SH3-binding, proline-rich region). Forms a ternary complex with ced-5 and ced-12. Interacts (via SH-2 domain) with src-1 (when activated and phosphorylated at 'Tyr-416').

Its function is as follows. Required for cell migration and engulfment of cell corpses but not for programmed cell death/apoptosis. Also has a role in the migration of the 2 gonadal distal tip cells (DTCs). This chain is Cell death abnormality protein 2, found in Caenorhabditis briggsae.